Here is a 167-residue protein sequence, read N- to C-terminus: Transcription antitermination protein NusB (167 aa).

The segment at 1–32 (MSDTPETGKPAAGTKPAARTEAKAPPKSARRR) is disordered.

It belongs to the NusB family.

Functionally, involved in transcription antitermination. Required for transcription of ribosomal RNA (rRNA) genes. Binds specifically to the boxA antiterminator sequence of the ribosomal RNA (rrn) operons. This is Transcription antitermination protein NusB from Cupriavidus pinatubonensis (strain JMP 134 / LMG 1197) (Cupriavidus necator (strain JMP 134)).